The sequence spans 344 residues: Cell cycle control protein 50C (344 aa).

Over 1–34 the chain is Cytoplasmic; that stretch reads MEETPQHCLSRLPDNSALKQQELPAHRLYFTARR. A helical transmembrane segment spans residues 35–55; it reads VLFVFFTTGIFCLCMGIILIL. At 56–306 the chain is on the extracellular side; sequence SARSTQEIEI…STLTWCGGNS (251 aa). Residues asparagine 66 and asparagine 261 are each glycosylated (N-linked (GlcNAc...) asparagine). The helical transmembrane segment at 307 to 327 threads the bilayer; it reads LFLGLAYTVTGAITWLASFTM. Topologically, residues 328–344 are cytoplasmic; the sequence is MAIHITLKNKQMSFFHQ.

It belongs to the CDC50/LEM3 family. In terms of tissue distribution, specifically expressed in testis.

It is found in the membrane. The sequence is that of Cell cycle control protein 50C (TMEM30C) from Macaca fascicularis (Crab-eating macaque).